The chain runs to 442 residues: ATP-dependent protease ATPase subunit HslU (442 aa).

ATP is bound by residues isoleucine 18 and 60-65 (GVGKTE). A disordered region spans residues 136-156 (LPKPKNDWDSTDSDANSNTRQ). 3 residues coordinate ATP: aspartate 255, glutamate 320, and arginine 392.

Belongs to the ClpX chaperone family. HslU subfamily. A double ring-shaped homohexamer of HslV is capped on each side by a ring-shaped HslU homohexamer. The assembly of the HslU/HslV complex is dependent on binding of ATP.

The protein resides in the cytoplasm. Its function is as follows. ATPase subunit of a proteasome-like degradation complex; this subunit has chaperone activity. The binding of ATP and its subsequent hydrolysis by HslU are essential for unfolding of protein substrates subsequently hydrolyzed by HslV. HslU recognizes the N-terminal part of its protein substrates and unfolds these before they are guided to HslV for hydrolysis. The sequence is that of ATP-dependent protease ATPase subunit HslU from Shewanella sp. (strain MR-7).